Here is a 373-residue protein sequence, read N- to C-terminus: Dual-specificity RNA methyltransferase RlmN (373 aa).

The active-site Proton acceptor is the Glu94. The region spanning 100 to 339 is the Radical SAM core domain; sequence EEDRATLCVS…VIVRKTRGDD (240 aa). A disulfide bridge connects residues Cys107 and Cys344. Cys114, Cys118, and Cys121 together coordinate [4Fe-4S] cluster. S-adenosyl-L-methionine contacts are provided by residues 168–169, Ser200, 222–224, and Asn301; these read GE and SIH. Cys344 functions as the S-methylcysteine intermediate in the catalytic mechanism.

Belongs to the radical SAM superfamily. RlmN family. Requires [4Fe-4S] cluster as cofactor.

It localises to the cytoplasm. It carries out the reaction adenosine(2503) in 23S rRNA + 2 reduced [2Fe-2S]-[ferredoxin] + 2 S-adenosyl-L-methionine = 2-methyladenosine(2503) in 23S rRNA + 5'-deoxyadenosine + L-methionine + 2 oxidized [2Fe-2S]-[ferredoxin] + S-adenosyl-L-homocysteine. The enzyme catalyses adenosine(37) in tRNA + 2 reduced [2Fe-2S]-[ferredoxin] + 2 S-adenosyl-L-methionine = 2-methyladenosine(37) in tRNA + 5'-deoxyadenosine + L-methionine + 2 oxidized [2Fe-2S]-[ferredoxin] + S-adenosyl-L-homocysteine. In terms of biological role, specifically methylates position 2 of adenine 2503 in 23S rRNA and position 2 of adenine 37 in tRNAs. m2A2503 modification seems to play a crucial role in the proofreading step occurring at the peptidyl transferase center and thus would serve to optimize ribosomal fidelity. The polypeptide is Dual-specificity RNA methyltransferase RlmN (Shewanella frigidimarina (strain NCIMB 400)).